The sequence spans 140 residues: Midkine (140 aa).

Positions 1–20 are cleaved as a signal peptide; that stretch reads MQHRSFFLLALVALLAVTTA. Disulfide bonds link C34–C58, C42–C67, C49–C71, C81–C113, and C91–C123.

The protein belongs to the pleiotrophin family. Homodimer. Interacts with ALK. Interacts with LRP1; promotes neuronal survival. Interacts with LRP2. Interacts with NCAM1. Interacts (via C-terminal) with PTPRZ1 (via chondroitin sulfate chains); this interaction is inhibited by PTN; this interaction promotes neuronal migration. Interacts with NCL; this interaction promotes NCL clustering and lateral movements of this complex into lipid rafts leading to MDK internalization. Interacts with LRP6 and LRP8: this interaction is calcium dependent. Interacts with ITGA4. Interacts with ITGA6. Interacts with ITGB1. Interacts with ITGA4:ITGB1 complex; this interaction mediates MDK-induced osteoblast cells migration through PXN phosphorylation. Interacts with ITGA6:ITGB1 complex; this interaction mediates MDK-induced neurite outgrowth. Interacts with NOTCH2; this interactio mediates a nuclear accumulation of NOTCH2 and therefore activation of NOTCH2 signaling leading to interaction between HES1 and STAT3. Interacts with GPC2 (via heparan sulfate chain); this interaction is inhibited by heparin followed by chondroitin sulfate E; this interaction induces GPC2 clustering through heparan sulfate chain; this interaction induces neuronal cell adhesion and neurite outgrowth. Interacts with SDC3; this interaction induces SDC3 clustering; this interaction induces neuronal cell adhesion and neurite outgrowth. Interacts with SDC1. Interacts with CSPG5; this interaction promotes elongation of oligodendroglial precursor-like cells. Expressed at a low level in arteries, and at higher levels in newly formed neointima. In brain, expressed in the caudate nucleus and the brain stem.

It localises to the secreted. In terms of biological role, developmentally regulated, secreted growth factor homologous to pleiotrophin (PTN), which has heparin binding activity. Binds anaplastic lymphoma kinase (ALK) which induces ALK activation and subsequent phosphorylation of the insulin receptor substrate (IRS1), followed by the activation of mitogen-activated protein kinase (MAPK) and PI3-kinase, and the induction of cell proliferation. Involved in neointima formation after arterial injury, possibly by mediating leukocyte recruitment. Also involved in early fetal adrenal gland development. Its function is as follows. Secreted protein that functions as a cytokine and growth factor and mediates its signal through cell-surface proteoglycan and non-proteoglycan receptors. Binds cell-surface proteoglycan receptors via their chondroitin sulfate (CS) groups. Thereby regulates many processes like inflammatory response, cell proliferation, cell adhesion, cell growth, cell survival, tissue regeneration, cell differentiation and cell migration. Participates in inflammatory processes by exerting two different activities. Firstly, mediates neutrophils and macrophages recruitment to the sites of inflammation both by direct action by cooperating namely with ITGB2 via LRP1 and by inducing chemokine expression. This inflammation can be accompanied by epithelial cell survival and smooth muscle cell migration after renal and vessel damage, respectively. Secondly, suppresses the development of tolerogenic dendric cells thereby inhibiting the differentiation of regulatory T cells and also promote T cell expansion through NFAT signaling and Th1 cell differentiation. Promotes tissue regeneration after injury or trauma. After heart damage negatively regulates the recruitment of inflammatory cells and mediates cell survival through activation of anti-apoptotic signaling pathways via MAPKs and AKT pathways through the activation of angiogenesis. Also facilitates liver regeneration as well as bone repair by recruiting macrophage at trauma site and by promoting cartilage development by facilitating chondrocyte differentiation. Plays a role in brain by promoting neural precursor cells survival and growth through interaction with heparan sulfate proteoglycans. Binds PTPRZ1 and promotes neuronal migration and embryonic neurons survival. Binds SDC3 or GPC2 and mediates neurite outgrowth and cell adhesion. Binds chondroitin sulfate E and heparin leading to inhibition of neuronal cell adhesion induced by binding with GPC2. Binds CSPG5 and promotes elongation of oligodendroglial precursor-like cells. Also binds ITGA6:ITGB1 complex; this interaction mediates MDK-induced neurite outgrowth. Binds LRP1; promotes neuronal survival. Binds ITGA4:ITGB1 complex; this interaction mediates MDK-induced osteoblast cells migration through PXN phosphorylation. Binds anaplastic lymphoma kinase (ALK) which induces ALK activation and subsequent phosphorylation of the insulin receptor substrate (IRS1), followed by the activation of mitogen-activated protein kinase (MAPK) and PI3-kinase, and the induction of cell proliferation. Promotes epithelial to mesenchymal transition through interaction with NOTCH2. During arteriogenesis, plays a role in vascular endothelial cell proliferation by inducing VEGFA expression and release which in turn induces nitric oxide synthase expression. Moreover activates vasodilation through nitric oxide synthase activation. Negatively regulates bone formation in response to mechanical load by inhibiting Wnt/beta-catenin signaling in osteoblasts. In addition plays a role in hippocampal development, working memory, auditory response, early fetal adrenal gland development and the female reproductive system. In Rattus norvegicus (Rat), this protein is Midkine.